Reading from the N-terminus, the 36-residue chain is Photosystem I reaction center subunit VIII (36 aa).

A helical membrane pass occupies residues L6–L26.

It belongs to the PsaI family.

Its subcellular location is the plastid. It is found in the chloroplast thylakoid membrane. May help in the organization of the PsaL subunit. This chain is Photosystem I reaction center subunit VIII, found in Liriodendron tulipifera (Tuliptree).